A 33-amino-acid chain; its full sequence is U13-ctenitoxin-Pn1c (33 aa).

3 disulfides stabilise this stretch: cysteine 3/cysteine 17, cysteine 10/cysteine 21, and cysteine 16/cysteine 30.

As to expression, expressed by the venom gland.

Its subcellular location is the secreted. Acts as a neurotoxin. The sequence is that of U13-ctenitoxin-Pn1c from Phoneutria nigriventer (Brazilian armed spider).